The following is a 350-amino-acid chain: Cilia- and flagella-associated protein 36 (350 aa).

Positions 142–167 (SELEQQEMKILQEVLRRSKEEYDLQM) form a coiled coil. Disordered regions lie at residues 171 to 233 (GLGS…ATTA) and 301 to 337 (RQTGKGLTDTAAAAAPEPKPATQEISVEEKKKLQKRK). Residues 177-220 (LASTSSSVSETPQNPEQRLSNGVSDPLTLTQPDSEMEESSTATQ) show a composition bias toward polar residues. A coiled-coil region spans residues 280–350 (VALQQRSEYL…EKLKEEVIKK (71 aa)).

It belongs to the CFAP36 family.

The protein resides in the nucleus. Its subcellular location is the cytoplasm. It localises to the cell projection. The protein localises to the cilium. It is found in the flagellum. The sequence is that of Cilia- and flagella-associated protein 36 from Danio rerio (Zebrafish).